The chain runs to 214 residues: Thymidylate kinase (214 aa).

Residue 10–17 (GIDGCGKT) participates in ATP binding.

Belongs to the thymidylate kinase family.

The enzyme catalyses dTMP + ATP = dTDP + ADP. In terms of biological role, phosphorylation of dTMP to form dTDP in both de novo and salvage pathways of dTTP synthesis. The sequence is that of Thymidylate kinase from Prochlorococcus marinus subsp. pastoris (strain CCMP1986 / NIES-2087 / MED4).